A 235-amino-acid polypeptide reads, in one-letter code: Phosphoribosylaminoimidazole-succinocarboxamide synthase (235 aa).

It belongs to the SAICAR synthetase family.

The enzyme catalyses 5-amino-1-(5-phospho-D-ribosyl)imidazole-4-carboxylate + L-aspartate + ATP = (2S)-2-[5-amino-1-(5-phospho-beta-D-ribosyl)imidazole-4-carboxamido]succinate + ADP + phosphate + 2 H(+). It participates in purine metabolism; IMP biosynthesis via de novo pathway; 5-amino-1-(5-phospho-D-ribosyl)imidazole-4-carboxamide from 5-amino-1-(5-phospho-D-ribosyl)imidazole-4-carboxylate: step 1/2. The polypeptide is Phosphoribosylaminoimidazole-succinocarboxamide synthase (Clostridium acetobutylicum (strain ATCC 824 / DSM 792 / JCM 1419 / IAM 19013 / LMG 5710 / NBRC 13948 / NRRL B-527 / VKM B-1787 / 2291 / W)).